Here is a 519-residue protein sequence, read N- to C-terminus: Putative cytochrome P450 CYP13A10 (519 aa).

Residues 3 to 23 traverse the membrane as a helical segment; the sequence is VILLAIPTLFIGFISYYLWIW. C465 is a heme binding site.

The protein belongs to the cytochrome P450 family. The cofactor is heme.

It localises to the membrane. In terms of biological role, cytochromes P450 are a group of heme-thiolate monooxygenases. They oxidize a variety of structurally unrelated compounds, including steroids, fatty acids, and xenobiotics. The polypeptide is Putative cytochrome P450 CYP13A10 (cyp-13A10) (Caenorhabditis elegans).